The primary structure comprises 405 residues: Multifunctional CCA protein (405 aa).

Residues glycine 8 and arginine 11 each contribute to the ATP site. CTP contacts are provided by glycine 8 and arginine 11. The Mg(2+) site is built by aspartate 21 and aspartate 23. Positions 91, 137, and 140 each coordinate ATP. The CTP site is built by arginine 91, arginine 137, and arginine 140. The region spanning 228–329 (TGIHSMMVLE…NDFLDKCDVW (102 aa)) is the HD domain.

It belongs to the tRNA nucleotidyltransferase/poly(A) polymerase family. Bacterial CCA-adding enzyme type 1 subfamily. As to quaternary structure, monomer. Can also form homodimers and oligomers. Mg(2+) serves as cofactor. Ni(2+) is required as a cofactor.

The catalysed reaction is a tRNA precursor + 2 CTP + ATP = a tRNA with a 3' CCA end + 3 diphosphate. It carries out the reaction a tRNA with a 3' CCA end + 2 CTP + ATP = a tRNA with a 3' CCACCA end + 3 diphosphate. In terms of biological role, catalyzes the addition and repair of the essential 3'-terminal CCA sequence in tRNAs without using a nucleic acid template. Adds these three nucleotides in the order of C, C, and A to the tRNA nucleotide-73, using CTP and ATP as substrates and producing inorganic pyrophosphate. tRNA 3'-terminal CCA addition is required both for tRNA processing and repair. Also involved in tRNA surveillance by mediating tandem CCA addition to generate a CCACCA at the 3' terminus of unstable tRNAs. While stable tRNAs receive only 3'-terminal CCA, unstable tRNAs are marked with CCACCA and rapidly degraded. The protein is Multifunctional CCA protein of Pseudoalteromonas atlantica (strain T6c / ATCC BAA-1087).